The chain runs to 267 residues: Lectin SfL-1 (267 aa).

4 consecutive repeat copies span residues 1-67, 68-135, 136-202, and 203-267. Residues 1-267 form a 4 X approximate tandem repeats region; the sequence is GRYTVQNQWG…GPIGFKGTAI (267 aa).

As to quaternary structure, monomer.

Its function is as follows. Lectin specific for high mannose N-glycans, recognizes the branched moiety of these glycans. Does not recognize other types of N-glycans or monosaccharides. This is Lectin SfL-1 from Solieria filiformis (Red alga).